Reading from the N-terminus, the 152-residue chain is Acidic phospholipase A2 S17-58 (152 aa).

An N-terminal signal peptide occupies residues Met1–Ala19. Residues Ser20–Leu27 constitute a propeptide that is removed on maturation. Intrachain disulfides connect Cys38-Cys104, Cys54-Cys151, Cys56-Cys72, Cys71-Cys132, Cys78-Cys125, Cys88-Cys118, and Cys111-Cys123. Residues Tyr55, Gly57, and Gly59 each contribute to the Ca(2+) site. Residue His75 is part of the active site. Ca(2+) is bound at residue Asp76. Residue Asp126 is part of the active site.

It belongs to the phospholipase A2 family. Group I subfamily. D49 sub-subfamily. It depends on Ca(2+) as a cofactor. In terms of tissue distribution, expressed by the venom gland.

The protein resides in the secreted. It catalyses the reaction a 1,2-diacyl-sn-glycero-3-phosphocholine + H2O = a 1-acyl-sn-glycero-3-phosphocholine + a fatty acid + H(+). Snake venom phospholipase A2 (PLA2) that inhibits collagen-induced platelet aggregation. PLA2 catalyzes the calcium-dependent hydrolysis of the 2-acyl groups in 3-sn-phosphoglycerides. In Austrelaps superbus (Lowland copperhead snake), this protein is Acidic phospholipase A2 S17-58.